Reading from the N-terminus, the 227-residue chain is 2,3-bisphosphoglycerate-dependent phosphoglycerate mutase (227 aa).

Substrate contacts are provided by residues 7-14 (RHGFSEWN), 20-21 (TG), R59, 86-89 (ERHY), K97, 113-114 (RR), and 182-183 (GN). The active-site Tele-phosphohistidine intermediate is the H8. The Proton donor/acceptor role is filled by E86.

The protein belongs to the phosphoglycerate mutase family. BPG-dependent PGAM subfamily. Homodimer.

It carries out the reaction (2R)-2-phosphoglycerate = (2R)-3-phosphoglycerate. It participates in carbohydrate degradation; glycolysis; pyruvate from D-glyceraldehyde 3-phosphate: step 3/5. In terms of biological role, catalyzes the interconversion of 2-phosphoglycerate and 3-phosphoglycerate. This chain is 2,3-bisphosphoglycerate-dependent phosphoglycerate mutase, found in Haemophilus ducreyi (strain 35000HP / ATCC 700724).